A 206-amino-acid chain; its full sequence is Thiamine-phosphate synthase (206 aa).

4-amino-2-methyl-5-(diphosphooxymethyl)pyrimidine-binding positions include 36–40 (QLRMK) and Asn-68. Residues Asp-69 and Asp-88 each contribute to the Mg(2+) site. Ser-106 contacts 4-amino-2-methyl-5-(diphosphooxymethyl)pyrimidine. 132 to 134 (TNT) is a binding site for 2-[(2R,5Z)-2-carboxy-4-methylthiazol-5(2H)-ylidene]ethyl phosphate. Residue Lys-135 coordinates 4-amino-2-methyl-5-(diphosphooxymethyl)pyrimidine. Residues Gly-162 and 182–183 (VS) each bind 2-[(2R,5Z)-2-carboxy-4-methylthiazol-5(2H)-ylidene]ethyl phosphate.

Belongs to the thiamine-phosphate synthase family. Mg(2+) is required as a cofactor.

It catalyses the reaction 2-[(2R,5Z)-2-carboxy-4-methylthiazol-5(2H)-ylidene]ethyl phosphate + 4-amino-2-methyl-5-(diphosphooxymethyl)pyrimidine + 2 H(+) = thiamine phosphate + CO2 + diphosphate. It carries out the reaction 2-(2-carboxy-4-methylthiazol-5-yl)ethyl phosphate + 4-amino-2-methyl-5-(diphosphooxymethyl)pyrimidine + 2 H(+) = thiamine phosphate + CO2 + diphosphate. The enzyme catalyses 4-methyl-5-(2-phosphooxyethyl)-thiazole + 4-amino-2-methyl-5-(diphosphooxymethyl)pyrimidine + H(+) = thiamine phosphate + diphosphate. The protein operates within cofactor biosynthesis; thiamine diphosphate biosynthesis; thiamine phosphate from 4-amino-2-methyl-5-diphosphomethylpyrimidine and 4-methyl-5-(2-phosphoethyl)-thiazole: step 1/1. Its function is as follows. Condenses 4-methyl-5-(beta-hydroxyethyl)thiazole monophosphate (THZ-P) and 2-methyl-4-amino-5-hydroxymethyl pyrimidine pyrophosphate (HMP-PP) to form thiamine monophosphate (TMP). The sequence is that of Thiamine-phosphate synthase from Methanococcus vannielii (strain ATCC 35089 / DSM 1224 / JCM 13029 / OCM 148 / SB).